The sequence spans 88 residues: Small ribosomal subunit protein bS20 (88 aa).

The segment at 1-21 (MANSAQAKKRARQNVKARKHN) is disordered. Positions 7–21 (AKKRARQNVKARKHN) are enriched in basic residues.

The protein belongs to the bacterial ribosomal protein bS20 family.

In terms of biological role, binds directly to 16S ribosomal RNA. The chain is Small ribosomal subunit protein bS20 from Acinetobacter baumannii (strain AB307-0294).